Here is a 402-residue protein sequence, read N- to C-terminus: 4-hydroxy-3-methylbut-2-enyl diphosphate reductase (402 aa).

Residue Cys-66 participates in [4Fe-4S] cluster binding. A (2E)-4-hydroxy-3-methylbut-2-enyl diphosphate-binding site is contributed by His-96. His-96 serves as a coordination point for dimethylallyl diphosphate. His-96 contacts isopentenyl diphosphate. [4Fe-4S] cluster is bound at residue Cys-157. His-185 is a binding site for (2E)-4-hydroxy-3-methylbut-2-enyl diphosphate. His-185 provides a ligand contact to dimethylallyl diphosphate. His-185 lines the isopentenyl diphosphate pocket. Glu-187 functions as the Proton donor in the catalytic mechanism. Thr-250 is a binding site for (2E)-4-hydroxy-3-methylbut-2-enyl diphosphate. Cys-288 contacts [4Fe-4S] cluster. (2E)-4-hydroxy-3-methylbut-2-enyl diphosphate is bound by residues Ser-317, Ser-318, Asn-319, and Ser-379. Dimethylallyl diphosphate contacts are provided by Ser-317, Ser-318, Asn-319, and Ser-379. 4 residues coordinate isopentenyl diphosphate: Ser-317, Ser-318, Asn-319, and Ser-379.

The protein belongs to the IspH family. The cofactor is [4Fe-4S] cluster.

It carries out the reaction isopentenyl diphosphate + 2 oxidized [2Fe-2S]-[ferredoxin] + H2O = (2E)-4-hydroxy-3-methylbut-2-enyl diphosphate + 2 reduced [2Fe-2S]-[ferredoxin] + 2 H(+). It catalyses the reaction dimethylallyl diphosphate + 2 oxidized [2Fe-2S]-[ferredoxin] + H2O = (2E)-4-hydroxy-3-methylbut-2-enyl diphosphate + 2 reduced [2Fe-2S]-[ferredoxin] + 2 H(+). The protein operates within isoprenoid biosynthesis; dimethylallyl diphosphate biosynthesis; dimethylallyl diphosphate from (2E)-4-hydroxy-3-methylbutenyl diphosphate: step 1/1. It participates in isoprenoid biosynthesis; isopentenyl diphosphate biosynthesis via DXP pathway; isopentenyl diphosphate from 1-deoxy-D-xylulose 5-phosphate: step 6/6. Its function is as follows. Catalyzes the conversion of 1-hydroxy-2-methyl-2-(E)-butenyl 4-diphosphate (HMBPP) into a mixture of isopentenyl diphosphate (IPP) and dimethylallyl diphosphate (DMAPP). Acts in the terminal step of the DOXP/MEP pathway for isoprenoid precursor biosynthesis. In Crocosphaera subtropica (strain ATCC 51142 / BH68) (Cyanothece sp. (strain ATCC 51142)), this protein is 4-hydroxy-3-methylbut-2-enyl diphosphate reductase.